A 292-amino-acid chain; its full sequence is Bifunctional protein FolD (292 aa).

NADP(+) is bound by residues 171-173 (GAS), Ile196, and Ile237.

Belongs to the tetrahydrofolate dehydrogenase/cyclohydrolase family. In terms of assembly, homodimer.

The catalysed reaction is (6R)-5,10-methylene-5,6,7,8-tetrahydrofolate + NADP(+) = (6R)-5,10-methenyltetrahydrofolate + NADPH. It carries out the reaction (6R)-5,10-methenyltetrahydrofolate + H2O = (6R)-10-formyltetrahydrofolate + H(+). Its pathway is one-carbon metabolism; tetrahydrofolate interconversion. Catalyzes the oxidation of 5,10-methylenetetrahydrofolate to 5,10-methenyltetrahydrofolate and then the hydrolysis of 5,10-methenyltetrahydrofolate to 10-formyltetrahydrofolate. The protein is Bifunctional protein FolD of Helicobacter acinonychis (strain Sheeba).